We begin with the raw amino-acid sequence, 322 residues long: Outer membrane protein assembly factor BamC (322 aa).

Positions 1–22 (MISLLAVAVLAGCSNPETRSQA) are cleaved as a signal peptide.

The protein belongs to the BamC family. Part of the Bam complex.

The protein resides in the cell outer membrane. In terms of biological role, part of the outer membrane protein assembly complex, which is involved in assembly and insertion of beta-barrel proteins into the outer membrane. The chain is Outer membrane protein assembly factor BamC from Oceanimonas sp. (strain GK1 / IBRC-M 10197).